The following is a 78-amino-acid chain: Large ribosomal subunit protein bL28 (78 aa).

Belongs to the bacterial ribosomal protein bL28 family.

In Psychrobacter sp. (strain PRwf-1), this protein is Large ribosomal subunit protein bL28.